Here is a 583-residue protein sequence, read N- to C-terminus: Isocitrate dehydrogenase kinase/phosphatase (583 aa).

ATP contacts are provided by residues 315-321 and Lys-336; that span reads APGIRGM. The active site involves Asp-371.

This sequence belongs to the AceK family.

It localises to the cytoplasm. The catalysed reaction is L-seryl-[isocitrate dehydrogenase] + ATP = O-phospho-L-seryl-[isocitrate dehydrogenase] + ADP + H(+). In terms of biological role, bifunctional enzyme which can phosphorylate or dephosphorylate isocitrate dehydrogenase (IDH) on a specific serine residue. This is a regulatory mechanism which enables bacteria to bypass the Krebs cycle via the glyoxylate shunt in response to the source of carbon. When bacteria are grown on glucose, IDH is fully active and unphosphorylated, but when grown on acetate or ethanol, the activity of IDH declines drastically concomitant with its phosphorylation. The polypeptide is Isocitrate dehydrogenase kinase/phosphatase (Salmonella heidelberg (strain SL476)).